The sequence spans 350 residues: Putative D-xylulose reductase (350 aa).

Cys-43, His-68, and Glu-154 together coordinate Zn(2+).

It belongs to the zinc-containing alcohol dehydrogenase family. The cofactor is Zn(2+).

The catalysed reaction is xylitol + NAD(+) = D-xylulose + NADH + H(+). The sequence is that of Putative D-xylulose reductase from Agrobacterium fabrum (strain C58 / ATCC 33970) (Agrobacterium tumefaciens (strain C58)).